A 51-amino-acid chain; its full sequence is CMEPKKVGPCRAAMPRFYFNSASNKCEGFTYGGCDANHNNFQSEADCKKAC.

Disulfide bonds link cysteine 1/cysteine 51, cysteine 10/cysteine 34, and cysteine 26/cysteine 47.

It belongs to the venom Kunitz-type family. Sea anemone type 2 potassium channel toxin subfamily.

It is found in the secreted. The protein resides in the nematocyst. Functionally, weak serine protease inhibitor that has been tested on both trypsin and elastase. May also act as a neurotoxin by inhibiting voltage-gated potassium channels (Kv). In vivo, is lethal to zebrafish larvae. In Palythoa caribaeorum (White encrusting zoanthid coral), this protein is Kunitz-like toxin PcKuz1.